Here is a 335-residue protein sequence, read N- to C-terminus: GTPase Obg (335 aa).

The Obg domain maps to 1–158; it reads MFVDQITLEL…RLVELELKLI (158 aa). The OBG-type G domain maps to 159–334; it reads ADIGLVGFPN…LYDLFKSKLS (176 aa). GTP is bound by residues 165 to 172, 190 to 194, 215 to 218, 285 to 288, and 315 to 317; these read GFPNAGKS, FTTLH, DIPG, NKID, and SGL. Mg(2+)-binding residues include Ser-172 and Thr-192.

It belongs to the TRAFAC class OBG-HflX-like GTPase superfamily. OBG GTPase family. In terms of assembly, monomer. Requires Mg(2+) as cofactor.

The protein resides in the cytoplasm. Its function is as follows. An essential GTPase which binds GTP, GDP and possibly (p)ppGpp with moderate affinity, with high nucleotide exchange rates and a fairly low GTP hydrolysis rate. Plays a role in control of the cell cycle, stress response, ribosome biogenesis and in those bacteria that undergo differentiation, in morphogenesis control. This is GTPase Obg from Chlamydia trachomatis serovar A (strain ATCC VR-571B / DSM 19440 / HAR-13).